A 295-amino-acid polypeptide reads, in one-letter code: Protease HtpX (295 aa).

A run of 2 helical transmembrane segments spans residues 4–24 (IFLFLATNLAIIVVLSIVLRL) and 42–62 (ALLIFAAVFGFGGSFISLAIS). Zn(2+) is bound at residue histidine 147. Residue glutamate 148 is part of the active site. A Zn(2+)-binding site is contributed by histidine 151. 2 helical membrane-spanning segments follow: residues 155–175 (GDMVTLALIQGVVNTFVIFLA) and 197–217 (FWITTIVAEIVFAILASIIVM). Zn(2+) is bound at residue glutamate 224.

This sequence belongs to the peptidase M48B family. It depends on Zn(2+) as a cofactor.

Its subcellular location is the cell inner membrane. The protein is Protease HtpX of Thioalkalivibrio sulfidiphilus (strain HL-EbGR7).